Consider the following 314-residue polypeptide: Tyrosine recombinase XerC (314 aa).

The Core-binding (CB) domain occupies 1–85 (MNEQVEAFLR…AVKSFFTFLT (85 aa)). The Tyr recombinase domain occupies 106–291 (DLPRALTPRQ…NHESSHTPHA (186 aa)). Residues Arg147, Lys171, His243, Arg246, and His269 contribute to the active site. Tyr278 acts as the O-(3'-phospho-DNA)-tyrosine intermediate in catalysis. Positions 284-314 (ESSHTPHAHPAPRASEVNGVRDEQALVPEEK) are disordered. Residues 302 to 314 (GVRDEQALVPEEK) are compositionally biased toward basic and acidic residues.

Belongs to the 'phage' integrase family. XerC subfamily. In terms of assembly, forms a cyclic heterotetrameric complex composed of two molecules of XerC and two molecules of XerD.

Its subcellular location is the cytoplasm. Its function is as follows. Site-specific tyrosine recombinase, which acts by catalyzing the cutting and rejoining of the recombining DNA molecules. The XerC-XerD complex is essential to convert dimers of the bacterial chromosome into monomers to permit their segregation at cell division. It also contributes to the segregational stability of plasmids. The polypeptide is Tyrosine recombinase XerC (Roseiflexus castenholzii (strain DSM 13941 / HLO8)).